We begin with the raw amino-acid sequence, 456 residues long: Trigger factor (456 aa).

One can recognise a PPIase FKBP-type domain in the interval 192 to 277 (GDTVVIDFVG…IHEVKTKEVP (86 aa)).

This sequence belongs to the FKBP-type PPIase family. Tig subfamily.

The protein localises to the cytoplasm. It carries out the reaction [protein]-peptidylproline (omega=180) = [protein]-peptidylproline (omega=0). Involved in protein export. Acts as a chaperone by maintaining the newly synthesized protein in an open conformation. Functions as a peptidyl-prolyl cis-trans isomerase. The protein is Trigger factor of Streptococcus pyogenes serotype M2 (strain MGAS10270).